The sequence spans 245 residues: 1-(5-phosphoribosyl)-5-[(5-phosphoribosylamino)methylideneamino] imidazole-4-carboxamide isomerase (245 aa).

The active-site Proton acceptor is Asp-12. Residue Asp-131 is the Proton donor of the active site.

This sequence belongs to the HisA/HisF family.

The protein resides in the cytoplasm. The enzyme catalyses 1-(5-phospho-beta-D-ribosyl)-5-[(5-phospho-beta-D-ribosylamino)methylideneamino]imidazole-4-carboxamide = 5-[(5-phospho-1-deoxy-D-ribulos-1-ylimino)methylamino]-1-(5-phospho-beta-D-ribosyl)imidazole-4-carboxamide. Its pathway is amino-acid biosynthesis; L-histidine biosynthesis; L-histidine from 5-phospho-alpha-D-ribose 1-diphosphate: step 4/9. In Thermobifida fusca (strain YX), this protein is 1-(5-phosphoribosyl)-5-[(5-phosphoribosylamino)methylideneamino] imidazole-4-carboxamide isomerase.